The chain runs to 874 residues: Valine--tRNA ligase (874 aa).

Residues 46 to 56 (PNVTGHLHIGH) carry the 'HIGH' region motif. The short motif at 523 to 527 (KMSKS) is the 'KMSKS' region element. Residue Lys-526 coordinates ATP. Positions 805–874 (DYVFQMKKAS…TLTDLKQKVK (70 aa)) form a coiled coil.

The protein belongs to the class-I aminoacyl-tRNA synthetase family. ValS type 1 subfamily. In terms of assembly, monomer.

The protein resides in the cytoplasm. The catalysed reaction is tRNA(Val) + L-valine + ATP = L-valyl-tRNA(Val) + AMP + diphosphate. Its function is as follows. Catalyzes the attachment of valine to tRNA(Val). As ValRS can inadvertently accommodate and process structurally similar amino acids such as threonine, to avoid such errors, it has a 'posttransfer' editing activity that hydrolyzes mischarged Thr-tRNA(Val) in a tRNA-dependent manner. The chain is Valine--tRNA ligase from Ureaplasma parvum serovar 3 (strain ATCC 700970).